Consider the following 124-residue polypeptide: Small ribosomal subunit protein uS12 (124 aa).

Asp-89 bears the 3-methylthioaspartic acid mark.

This sequence belongs to the universal ribosomal protein uS12 family. Part of the 30S ribosomal subunit. Contacts proteins S8 and S17. May interact with IF1 in the 30S initiation complex.

Its function is as follows. With S4 and S5 plays an important role in translational accuracy. In terms of biological role, interacts with and stabilizes bases of the 16S rRNA that are involved in tRNA selection in the A site and with the mRNA backbone. Located at the interface of the 30S and 50S subunits, it traverses the body of the 30S subunit contacting proteins on the other side and probably holding the rRNA structure together. The combined cluster of proteins S8, S12 and S17 appears to hold together the shoulder and platform of the 30S subunit. This is Small ribosomal subunit protein uS12 from Vibrio atlanticus (strain LGP32) (Vibrio splendidus (strain Mel32)).